Reading from the N-terminus, the 109-residue chain is Cytochrome c (109 aa).

The heme c site is built by Cys25, Cys28, His29, and Met88.

The protein belongs to the cytochrome c family. Post-translationally, binds 1 heme c group covalently per subunit.

It localises to the mitochondrion intermembrane space. Its function is as follows. Electron carrier protein. The oxidized form of the cytochrome c heme group can accept an electron from the heme group of the cytochrome c1 subunit of cytochrome reductase. Cytochrome c then transfers this electron to the cytochrome oxidase complex, the final protein carrier in the mitochondrial electron-transport chain. This Tetrahymena pyriformis protein is Cytochrome c.